A 461-amino-acid chain; its full sequence is Serine carboxypeptidase-like 51 (461 aa).

Residues 1 to 20 (MKTTVVYLVILCLIVSCTNG) form the signal peptide. Asparagine 99 and asparagine 152 each carry an N-linked (GlcNAc...) asparagine glycan. Serine 166 is a catalytic residue. Asparagine 340 carries N-linked (GlcNAc...) asparagine glycosylation. Residues aspartate 379 and histidine 438 contribute to the active site.

Belongs to the peptidase S10 family. As to expression, expressed in seedlings, roots, flowers and siliques.

Its subcellular location is the secreted. In terms of biological role, probable carboxypeptidase. This chain is Serine carboxypeptidase-like 51 (SCPL51), found in Arabidopsis thaliana (Mouse-ear cress).